Consider the following 577-residue polypeptide: Aspartate--tRNA(Asp/Asn) ligase (577 aa).

Residue glutamate 171 coordinates L-aspartate. An aspartate region spans residues 195 to 198 (QLFK). An L-aspartate-binding site is contributed by arginine 217. ATP is bound by residues 217 to 219 (RDE) and glutamine 226. Histidine 444 lines the L-aspartate pocket. ATP is bound at residue glutamate 474. Arginine 481 lines the L-aspartate pocket. Residue 526 to 529 (GFDR) coordinates ATP.

The protein belongs to the class-II aminoacyl-tRNA synthetase family. Type 1 subfamily. In terms of assembly, homodimer.

The protein localises to the cytoplasm. The enzyme catalyses tRNA(Asx) + L-aspartate + ATP = L-aspartyl-tRNA(Asx) + AMP + diphosphate. Aspartyl-tRNA synthetase with relaxed tRNA specificity since it is able to aspartylate not only its cognate tRNA(Asp) but also tRNA(Asn). Reaction proceeds in two steps: L-aspartate is first activated by ATP to form Asp-AMP and then transferred to the acceptor end of tRNA(Asp/Asn). This chain is Aspartate--tRNA(Asp/Asn) ligase, found in Helicobacter pylori (strain HPAG1).